A 305-amino-acid chain; its full sequence is Sulfate adenylyltransferase subunit 2 (305 aa).

The interval 283-305 (RQGRVIDHDQSASMEKKKQEGYF) is disordered.

This sequence belongs to the PAPS reductase family. CysD subfamily. Heterodimer composed of CysD, the smaller subunit, and CysN.

The enzyme catalyses sulfate + ATP + H(+) = adenosine 5'-phosphosulfate + diphosphate. It functions in the pathway sulfur metabolism; hydrogen sulfide biosynthesis; sulfite from sulfate: step 1/3. With CysN forms the ATP sulfurylase (ATPS) that catalyzes the adenylation of sulfate producing adenosine 5'-phosphosulfate (APS) and diphosphate, the first enzymatic step in sulfur assimilation pathway. APS synthesis involves the formation of a high-energy phosphoric-sulfuric acid anhydride bond driven by GTP hydrolysis by CysN coupled to ATP hydrolysis by CysD. This is Sulfate adenylyltransferase subunit 2 from Caulobacter sp. (strain K31).